The following is a 374-amino-acid chain: O-methyltransferase acrG (374 aa).

Positions 19, 70, 96, 128, and 129 each coordinate S-adenosyl-L-homocysteine. Residue Phe-245 coordinates Mg(2+).

This sequence belongs to the methyltransferase superfamily. Type-7 methyltransferase family.

It functions in the pathway secondary metabolite biosynthesis. Its function is as follows. O-methyltransferase; part of the cluster that mediates the biosynthesis of acurin A, a highly reduced polyketide coupled to a serine via a peptide bond. The activities of the highly reducing polyketide synthase acrA and the nonribosomal peptide synthetase acrB are collectively responsible for the synthesis of the acurin A core structure with a heptaketide backbone produced by acrA covalently fused to a L-serine by acrB. After the formation of the PK-NRP hybrid product, it is detached from acrB by reductive release to set up the formation of the lactam ring by aldol condensation. The hydrolyase acrC then catalyzes water loss to generate a double bond in the ring. This double bond is probably reduced, which is followed by three oxidations at C-22 to generate the carboxylic acid moiety, involving probably the FAD-binding monooxygenase acrE and the cytochrome P450 monooxygenases acrD and acrF. Finally, a last methylation step performed by the O-methyltransferase acrG leads to the production of acurin A. The chain is O-methyltransferase acrG from Aspergillus aculeatus (strain ATCC 16872 / CBS 172.66 / WB 5094).